We begin with the raw amino-acid sequence, 73 residues long: Sec-independent protein translocase protein TatA (73 aa).

Residues 1–21 (MGSFSIWHWMIVLVIVLLVFG) form a helical membrane-spanning segment.

This sequence belongs to the TatA/E family. The Tat system comprises two distinct complexes: a TatABC complex, containing multiple copies of TatA, TatB and TatC subunits, and a separate TatA complex, containing only TatA subunits. Substrates initially bind to the TatABC complex, which probably triggers association of the separate TatA complex to form the active translocon.

The protein resides in the cell inner membrane. Its function is as follows. Part of the twin-arginine translocation (Tat) system that transports large folded proteins containing a characteristic twin-arginine motif in their signal peptide across membranes. TatA could form the protein-conducting channel of the Tat system. The sequence is that of Sec-independent protein translocase protein TatA from Mesorhizobium japonicum (strain LMG 29417 / CECT 9101 / MAFF 303099) (Mesorhizobium loti (strain MAFF 303099)).